A 201-amino-acid polypeptide reads, in one-letter code: Probable nicotinate-nucleotide adenylyltransferase (201 aa).

Belongs to the NadD family.

It carries out the reaction nicotinate beta-D-ribonucleotide + ATP + H(+) = deamido-NAD(+) + diphosphate. It participates in cofactor biosynthesis; NAD(+) biosynthesis; deamido-NAD(+) from nicotinate D-ribonucleotide: step 1/1. Catalyzes the reversible adenylation of nicotinate mononucleotide (NaMN) to nicotinic acid adenine dinucleotide (NaAD). The chain is Probable nicotinate-nucleotide adenylyltransferase from Clostridium botulinum (strain Langeland / NCTC 10281 / Type F).